A 792-amino-acid chain; its full sequence is Carboxysome assembly protein CsoS2 (792 aa).

The span at 1–15 shows a compositional bias: basic and acidic residues; the sequence is MAKQSSRELALERRK. Residues 1-235 form an N-terminal domain region; that stretch reads MAKQSSRELA…EISQRVRELR (235 aa). Disordered stretches follow at residues 1–259, 280–299, and 338–359; these read MAKQ…RNGS, QVVT…NEAS, and HGNR…DEPG. Residues 7–22 form an N-repeat 1 repeat; that stretch reads RELALERRKALSNSGK. Polar residues-rich tracts occupy residues 17-36 and 69-82; these read LSNS…NRIR and DTSF…SGAS. An N-repeat 2 repeat occupies 94-109; it reads RELVLARRDELSRRGQ. 2 stretches are compositionally biased toward basic and acidic residues: residues 97–106 and 113–126; these read VLARRDELSR and KSKD…EKIS. Residues 161–175 are compositionally biased toward polar residues; that stretch reads DTVSRLSSRNSTSRP. 2 N-repeat repeats span residues 187-202 and 225-240; these read RALV…KHGK and REIS…KSGA. The span at 218–236 shows a compositional bias: basic and acidic residues; it reads GDPDLSSREISQRVRELRS. Residues 240–615 form a middle region region; the sequence is ATGKKRSGAC…VQACGSDAPA (376 aa). M-repeat repeat units lie at residues 270–319, 330–379, 388–427, 441–490, 500–549, and 560–609; these read KVGL…DTFC, KVAV…NQYC, KVGQ…GDQY, KVGS…NTFC, KVGL…SGWC, and RTPK…VQAC. 2 disordered regions span residues 608–662 and 687–792; these read ACGS…GSQI and HFKS…GARG. The interval 616 to 792 is C-terminal domain; that stretch reads GSNDHQGSSE…LITVSGGARG (177 aa). Polar residues-rich tracts occupy residues 618–636 and 651–662; these read NDHQ…SVQS and VTGTSYEQGSQI. C-repeat repeat units follow at residues 633–678 and 703–738; these read SVQS…GTEQ and TRPE…EGAS. A C-terminal peptide (CTP) region spans residues 763–792; the sequence is EVSQPMSRVTGSSGNTDQGSLITVSGGARG. Positions 764–785 are enriched in polar residues; the sequence is VSQPMSRVTGSSGNTDQGSLIT.

It belongs to the CsoS2 family. As to quaternary structure, probably interacts with the carboxysome major shell protein CsoS1 via the N-terminal domain; this complex probably also interacts with RuBisCO. In terms of processing, has been suggested to undergo ribosomal frameshifting, as does its ortholog in H.neapolitanus. The exact position of the putative frameshift is not given, but it would probably occur in the sixth M-repeat and remove the C-terminus.

The protein resides in the carboxysome. In terms of biological role, required for alpha-carboxysome (Cb) assembly, mediates interaction between RuBisCO and the Cb shell. The protein is probably intrinsically disordered. The C-terminal repeats act as the encapsulation signal to target proteins to the Cb; they are necessary and sufficient to target both CsoS2 and foreign proteins to the Cb. The N-terminal repeats of this protein bind simultaneously to both subunits of RuBisCO. Probably also interacts with the major shell proteins (CsoS1); that interaction would increase the local concentration of CsoS2 so that it can condense RuBisCO and full carboxysomes can be formed. The chain is Carboxysome assembly protein CsoS2 from Prochlorococcus marinus (strain MIT 9313).